The chain runs to 370 residues: Aspartate-semialdehyde dehydrogenase (370 aa).

Residues 10–13 (RGMV), 37–38 (TS), and Gln-73 contribute to the NADP(+) site. Arg-102 contributes to the phosphate binding site. Residue Cys-135 is the Acyl-thioester intermediate of the active site. Gln-162 lines the substrate pocket. Residues 165 to 166 (SG) and Pro-193 each bind NADP(+). Substrate is bound at residue Glu-241. Lys-244 contacts phosphate. Arg-268 provides a ligand contact to substrate. His-275 acts as the Proton acceptor in catalysis. Gln-351 serves as a coordination point for NADP(+).

It belongs to the aspartate-semialdehyde dehydrogenase family. As to quaternary structure, homodimer.

The catalysed reaction is L-aspartate 4-semialdehyde + phosphate + NADP(+) = 4-phospho-L-aspartate + NADPH + H(+). It participates in amino-acid biosynthesis; L-lysine biosynthesis via DAP pathway; (S)-tetrahydrodipicolinate from L-aspartate: step 2/4. The protein operates within amino-acid biosynthesis; L-methionine biosynthesis via de novo pathway; L-homoserine from L-aspartate: step 2/3. Its pathway is amino-acid biosynthesis; L-threonine biosynthesis; L-threonine from L-aspartate: step 2/5. Catalyzes the NADPH-dependent formation of L-aspartate-semialdehyde (L-ASA) by the reductive dephosphorylation of L-aspartyl-4-phosphate. This Pseudomonas aeruginosa (strain ATCC 15692 / DSM 22644 / CIP 104116 / JCM 14847 / LMG 12228 / 1C / PRS 101 / PAO1) protein is Aspartate-semialdehyde dehydrogenase (asd).